The sequence spans 278 residues: Non-heme chloroperoxidase (278 aa).

One can recognise an AB hydrolase-1 domain in the interval 24–259; sequence PIVFHHGWPL…LKTYPGYSHG (236 aa). Catalysis depends on residues S97, D229, and H258.

The protein belongs to the AB hydrolase superfamily. Bacterial non-heme haloperoxidase / perhydrolase family. As to quaternary structure, homodimer.

Chlorinates and brominates suitable organic compounds. Involved in the biosynthesis of the antibiotic pyrrolnitrin. This chain is Non-heme chloroperoxidase (cpo), found in Burkholderia pyrrocinia (Pseudomonas pyrrocinia).